The following is a 351-amino-acid chain: (S)-coclaurine N-methyltransferase (351 aa).

Residues Gln-91–Ser-92, Val-126–Gly-134, Gly-130–Gly-132, and Thr-153–Gln-158 each bind S-adenosyl-L-methionine. Cys-326 is a catalytic residue.

The protein belongs to the CFA/CMAS family. Expressed in roots, stems, flower buds and at lower levels, in leaves. Restricted to sieve elements of the phloem adjacent or proximal to laticifers.

Its subcellular location is the cytoplasm. The enzyme catalyses (S)-coclaurine + S-adenosyl-L-methionine = (S)-N-methylcoclaurine + S-adenosyl-L-homocysteine + H(+). The protein operates within alkaloid biosynthesis; (S)-reticuline biosynthesis; (S)-reticuline from (S)-norcoclaurine: step 2/4. Its function is as follows. Involved in the biosynthesis of benzylisoquinoline alkaloids. N-methyltransferase methylating (S)-coclaurine. 4'-O-methylcoclaurine and norlaudanine can also be used as substrates. This is (S)-coclaurine N-methyltransferase from Papaver somniferum (Opium poppy).